A 113-amino-acid polypeptide reads, in one-letter code: Small ribosomal subunit protein bS6 (113 aa).

It belongs to the bacterial ribosomal protein bS6 family.

Its function is as follows. Binds together with bS18 to 16S ribosomal RNA. The sequence is that of Small ribosomal subunit protein bS6 from Buchnera aphidicola subsp. Schizaphis graminum (strain Sg).